The sequence spans 85 residues: RNA-binding protein Hfq (85 aa).

A Sm domain is found at 9–68; that stretch reads DPFLNALRRERVPVSIYLVNGIKLQGQVESFDQFVILLKNTVSQMVYKHAISTVVPARPF.

Belongs to the Hfq family. In terms of assembly, homohexamer.

Functionally, RNA chaperone that binds small regulatory RNA (sRNAs) and mRNAs to facilitate mRNA translational regulation in response to envelope stress, environmental stress and changes in metabolite concentrations. Also binds with high specificity to tRNAs. This Shewanella frigidimarina (strain NCIMB 400) protein is RNA-binding protein Hfq.